A 314-amino-acid polypeptide reads, in one-letter code: Basic endochitinase (314 aa).

The N-terminal stretch at 1 to 20 (MGLWALVAFCLLSLILVGSA) is a signal peptide. The 41-residue stretch at 21–61 (EQCGGQAGGRVCPGGACCSKFGWCGNTADYCGSGCQSQCSS) folds into the Chitin-binding type-1 domain. Intrachain disulfides connect Cys-23-Cys-38, Cys-32-Cys-44, Cys-37-Cys-51, Cys-55-Cys-59, Cys-86-Cys-148, Cys-160-Cys-168, and Cys-267-Cys-299. Catalysis depends on Glu-130, which acts as the Proton donor.

It belongs to the glycosyl hydrolase 19 family. Chitinase class I subfamily.

The catalysed reaction is Random endo-hydrolysis of N-acetyl-beta-D-glucosaminide (1-&gt;4)-beta-linkages in chitin and chitodextrins.. Its function is as follows. Defense against chitin-containing fungal pathogens. The sequence is that of Basic endochitinase (CHIT1B) from Vitis vinifera (Grape).